We begin with the raw amino-acid sequence, 225 residues long: MFIGIVSLFLTVLVYLGAKKVYQRFPRVYTSPLLVTPAVLVGLLLLVNVPYESYNLGGGLLTDMLQPATVAFAIPLYKYFPVLKKYAVEIILNVAVGSCIAIISTALIAKWLHLGTGLIDSLVPRSVTTPIAMNVSEMIGGMPAVTAVFVILTALLGTVIGPMVIRYFRIDNEIARGVLLGTSAHGAGTSKAFELSSVSGTISSVSMILAAIMTLCAAPFLLSFM.

The next 6 membrane-spanning stretches (helical) occupy residues 1–21, 31–51, 56–76, 88–108, 145–165, and 205–225; these read MFIG…AKKV, SPLL…NVPY, LGGG…AIPL, VEII…TALI, VTAV…PMVI, and VSMI…LSFM.

It belongs to the YohK (E.coli)/YwbG (IPA-22R) (B.subtilis) family.

It is found in the cell membrane. This is an uncharacterized protein from Bacillus subtilis (strain 168).